A 419-amino-acid polypeptide reads, in one-letter code: Mitogen-activated protein kinase spm1 (419 aa).

The Protein kinase domain occupies Y23 to L314. ATP is bound by residues L29 to V37 and K52. Residue D149 is the Proton acceptor of the active site.

This sequence belongs to the protein kinase superfamily. Ser/Thr protein kinase family. MAP kinase subfamily. Requires Mg(2+) as cofactor. Post-translationally, phosphorylated by the MAP kinase kinase mkk1.

The catalysed reaction is L-seryl-[protein] + ATP = O-phospho-L-seryl-[protein] + ADP + H(+). The enzyme catalyses L-threonyl-[protein] + ATP = O-phospho-L-threonyl-[protein] + ADP + H(+). Its function is as follows. Mitogen-activated protein kinase, part of the mkh1-mkk1-spm1 MAPK cascade that regulates vegetative growth, conidial formation, colony surface hydrophobicity, osmotic stress, cell wall integrity maintenance, carbon and nitrogen source utilization, chitin distribution, septa formation, and pathogenicity. This is Mitogen-activated protein kinase spm1 from Cytospora mali (Apple Valsa canker fungus).